The following is a 1997-amino-acid chain: MDHFSTVLQRPPHFDEDGTEGRGDRGNGAGPGPAPPPPPPRGGLRDILNPVSSNSAVQSQAAAAAPPPPPAVASSSLHGIAASVPPPSSTNSMRATPHSSSSFNLRSPTREPSEYRHPLSSLATPAPFAASPPTSIANANNTNNNNALGAAGSLSSQPPPPPPTGPRSILNPPTPSQQHQQQHHHPNPFVAASAPSLPPPPSSLQAPPAITPIAGLSAPAPASGSLPLSAGGIGNSITVSSSSQPPARASQLHAPSAYYSPAESFRDRDSSVREKSSTGGSFYDPTAEASNGISGSSPRKDRDRDRDHRGTTRESQRRSVSGHSDTGSSWRNATQTSASNKTRDPYNYSPSSADYYNTRKKENYPVDNTTSSSIAAPSNFTVATRSPVAALSHPASIAAPASVGSLTGSISPRLSLRPPSMASPTIRSAVLANPTNGTTSTALPALGRNDSPPSKMSPGTSTNPSRAAGVMSFSNILSSSEPVPRPRATSPNNPDDDDDVPMKVERADSSEKVVKEKKERKPRQPKQPRISDIRHSESTPKGRRGSTKQESPLPNIRIPAKRMANGAPKQQKTFSAENEEKIRKAMDRIETRELPHEDEFEEELRLWRERREYKRQQMNQRDLRQRRQRRADYTEVEAQKLKLHADFGKRRYDDLNYDDALQEVRERELFAEKERKKDMQRKRRREKSMATTMEAKAAALARASAAQDEAERQKYMREAERANKKVQQTRLILQKGIKGPSRNTGPIEPNLEGGTMATFQAENMEPGKTKGKGRAGARPKKSKEQKQAEKDAAEAAQAALDAGLELPPKEETNKIRIKLTKTKAPKEADVDKDKENKEPQEPKEPKEPKEKVIKEKVVEEPKDPLELKFQSKGFNQIYDQIWRDLARKDVNKVFRLAIDSYSTKSSNLKKTAILASKEAKRWQLRTNKGTKDLQARAKRVMRDMMGFWKRNEREERDLRKAAEKQELENARKEEADREAARQKRKLNFLISQTELYSHFIGKKIKTNEVERSTDHPDEIAAEKDKIPENEMDIEVPTGPIGAKVTNFENLDFDAEDESTLRAAAMANAQNAIAEAQKKAREFNKEESKLDEDGEMNFQNPTMMGDVEIEQPKLLNCQLKEYQLKGLNWLVNLYEQGINGILADEMGLGKTVQSISVMAYLAEKYDIWGPFLVVAPASTLHNWQQEITKFVPQFKVLPYWGTAGDRKVLRKFWDRKHTTYKKDAPFHVMITSYQLVVSDVAYFQKMKWQYMILDEAQAIKSSQSSRWKCLLGFHCRNRLLLTGTPIQNNMQELWALLHFIMPSLFDSHDEFSEWFSKDIESHAQSNTKLNEDQLKRLHMILKPFMLRRVKKHVQKELGDKIEMDVFCDLTYRQRAMYANLRNQISIMDLIEKATLGDDDSASLMNLVMQFRKVCNHPDLFERADTASPYSFGHFAETASFIREGSQVTVGYSTRSLIQYELPRLLWRDGGRLHKAGEDNQVAGWRNQWLNEKFNIWTPEHIRESLAGTDNFSWLRFADTSYEEAYRASHKDLFARAVEMSTKKNRLAEIKIAYDEPEDLNFTPAHALFHIREREDRRPLAEITEQGILGSLMNVSRSAFSETGLGRLEQAAAPKASAPPIEVVCDSRSAVVERENIMFNAPMRKVLFGPTLAEEKALVVQKVPPSRYPPPALLPAPDKEKQKFTNITVPSMRRFVTDSGKLAKLDELLRELKENGHRVLLYFQMTRMIDLMEEYLTYRNYKYCRLDGSTKLEDRRDTVADFQTRPEIFIFLLSTRAGGLGINLTSADTVIFYDSDWNPTIDSQAMDRAHRLGQTKQVTVYRLITRGTIEERIRKRAMQKEEVQRVVITGGSSAAGGGVDFSGRRAPENRNRDIAMWLADDEQAEMIEKRERELLESGELDKMQKKSRGGNKRKRGGAGGEGKEVSLDEMYHEGEGNFDDGGNNIKGSGTATPNGAAGGEGGDGKGAVGGAAKKRKTGGSKKAKTTKQRLAIADGEIDI.

3 disordered regions span residues 1 to 378 (MDHF…AAPS), 397 to 579 (IAAP…AENE), and 674 to 858 (ERKK…EKVV). Positions 12–25 (PHFDEDGTEGRGDR) are enriched in basic and acidic residues. A compositionally biased stretch (pro residues) spans 32-41 (GPAPPPPPPR). A compositionally biased stretch (low complexity) spans 49–64 (NPVSSNSAVQSQAAAA). The span at 89–107 (STNSMRATPHSSSSFNLRS) shows a compositional bias: polar residues. The segment covering 108–117 (PTREPSEYRH) has biased composition (basic and acidic residues). Composition is skewed to low complexity over residues 118–156 (PLSS…SLSS), 203–230 (SLQA…PLSA), and 240–251 (SSSSQPPARASQ). Residues 264–276 (SFRDRDSSVREKS) show a composition bias toward basic and acidic residues. The segment covering 288 to 297 (EASNGISGSS) has biased composition (polar residues). A compositionally biased stretch (basic and acidic residues) spans 298–317 (PRKDRDRDRDHRGTTRESQR). Composition is skewed to polar residues over residues 318 to 340 (RSVS…SASN) and 366 to 378 (VDNT…AAPS). The span at 411 to 420 (SPRLSLRPPS) shows a compositional bias: low complexity. Composition is skewed to polar residues over residues 433–442 (NPTNGTTSTA), 451–465 (SPPS…TNPS), and 472–481 (SFSNILSSSE). Basic and acidic residues-rich tracts occupy residues 500 to 519 (VPMK…EKKE) and 529 to 540 (RISDIRHSESTP). A coiled-coil region spans residues 666 to 735 (ERELFAEKER…VQQTRLILQK (70 aa)). Residues 689 to 707 (MATTMEAKAAALARASAAQ) are compositionally biased toward low complexity. Residues 709-723 (EAERQKYMREAERAN) are compositionally biased toward basic and acidic residues. The span at 769–781 (TKGKGRAGARPKK) shows a compositional bias: basic residues. Basic and acidic residues predominate over residues 782 to 793 (SKEQKQAEKDAA). Positions 794 to 806 (EAAQAALDAGLEL) are enriched in low complexity. Over residues 824–858 (APKEADVDKDKENKEPQEPKEPKEPKEKVIKEKVV) the composition is skewed to basic and acidic residues. One can recognise a DBINO domain in the interval 881-1006 (IWRDLARKDV…SHFIGKKIKT (126 aa)). The 173-residue stretch at 1130-1302 (VNLYEQGING…WALLHFIMPS (173 aa)) folds into the Helicase ATP-binding domain. 1143-1150 (DEMGLGKT) is a binding site for ATP. Residues 1253–1256 (DEAQ) carry the DEAQ box motif. Positions 1702-1858 (KLDELLRELK…GSSAAGGGVD (157 aa)) constitute a Helicase C-terminal domain. The span at 1891-1902 (ELLESGELDKMQ) shows a compositional bias: basic and acidic residues. Residues 1891–1986 (ELLESGELDK…GSKKAKTTKQ (96 aa)) form a disordered region. A compositionally biased stretch (basic residues) spans 1903-1914 (KKSRGGNKRKRG). Positions 1919-1933 (EGKEVSLDEMYHEGE) are enriched in basic and acidic residues. Residues 1954–1967 (AAGGEGGDGKGAVG) show a composition bias toward gly residues. Residues 1970-1985 (AKKRKTGGSKKAKTTK) are compositionally biased toward basic residues.

This sequence belongs to the SNF2/RAD54 helicase family. In terms of assembly, component of the INO80 chromatin-remodeling complex.

The protein localises to the nucleus. It catalyses the reaction ATP + H2O = ADP + phosphate + H(+). Its function is as follows. ATPase component of the INO80 complex which remodels chromatin by shifting nucleosomes and is involved in DNA repair. The sequence is that of Chromatin-remodeling ATPase INO80 (crf2-1) from Neurospora crassa (strain ATCC 24698 / 74-OR23-1A / CBS 708.71 / DSM 1257 / FGSC 987).